The chain runs to 138 residues: Small ribosomal subunit protein uS11 (138 aa).

Positions 1–12 (MAQAKKGGTAAK) are enriched in low complexity. 2 disordered regions span residues 1–32 (MAQA…AAHI) and 119–138 (ISDV…RRRV). Positions 13–22 (KGQKTRRREK) are enriched in basic residues.

This sequence belongs to the universal ribosomal protein uS11 family. Part of the 30S ribosomal subunit. Interacts with proteins S7 and S18. Binds to IF-3.

In terms of biological role, located on the platform of the 30S subunit, it bridges several disparate RNA helices of the 16S rRNA. Forms part of the Shine-Dalgarno cleft in the 70S ribosome. The chain is Small ribosomal subunit protein uS11 from Mycolicibacterium smegmatis (strain ATCC 700084 / mc(2)155) (Mycobacterium smegmatis).